A 354-amino-acid polypeptide reads, in one-letter code: WASH complex subunit 3 (354 aa).

Residues 76–354 (SSANVPVHNT…DDDDDDDESW (279 aa)) form a disordered region. The span at 107 to 143 (IPPPPPPPPPPMTGVPPPPPPPPPPPISKSNIPPPPA) shows a compositional bias: pro residues. Positions 150–159 (ESDDDDEDNN) are enriched in acidic residues. Residues 213–244 (PQPPQPQPQSPSPQPPPPPTTTSSIPVPPPPF) are compositionally biased toward pro residues. The segment covering 251–260 (SDDDDDDDEG) has biased composition (acidic residues). Residues 277-290 (NNNSNSNSYSNNNN) are compositionally biased toward low complexity. Acidic residues-rich tracts occupy residues 293-307 (DDDD…DDDN) and 342-354 (DADD…DESW).

It belongs to the CCDC53 family. Probable component of the WASH complex.

This is WASH complex subunit 3 from Dictyostelium discoideum (Social amoeba).